We begin with the raw amino-acid sequence, 451 residues long: Bifunctional protein GlmU (451 aa).

Residues 1 to 229 (MQRHAIVLAA…FEEIMGVNDR (229 aa)) are pyrophosphorylase. Residues 8-11 (LAAG), lysine 22, glutamine 72, and 77-78 (GT) each bind UDP-N-acetyl-alpha-D-glucosamine. Residue aspartate 102 coordinates Mg(2+). 3 residues coordinate UDP-N-acetyl-alpha-D-glucosamine: glycine 139, glutamate 154, and asparagine 227. Asparagine 227 contacts Mg(2+). Residues 230-250 (VMLSEAEKAFRKRINEQHMKN) are linker. Positions 251–451 (GVTIIDPVTT…QTTKEGYLKK (201 aa)) are N-acetyltransferase. 2 residues coordinate UDP-N-acetyl-alpha-D-glucosamine: arginine 332 and lysine 350. Histidine 362 functions as the Proton acceptor in the catalytic mechanism. Residues tyrosine 365 and asparagine 376 each contribute to the UDP-N-acetyl-alpha-D-glucosamine site. Acetyl-CoA is bound by residues 385 to 386 (NY), alanine 422, and arginine 439.

The protein in the N-terminal section; belongs to the N-acetylglucosamine-1-phosphate uridyltransferase family. It in the C-terminal section; belongs to the transferase hexapeptide repeat family. Homotrimer. It depends on Mg(2+) as a cofactor.

The protein localises to the cytoplasm. The enzyme catalyses alpha-D-glucosamine 1-phosphate + acetyl-CoA = N-acetyl-alpha-D-glucosamine 1-phosphate + CoA + H(+). It carries out the reaction N-acetyl-alpha-D-glucosamine 1-phosphate + UTP + H(+) = UDP-N-acetyl-alpha-D-glucosamine + diphosphate. It functions in the pathway nucleotide-sugar biosynthesis; UDP-N-acetyl-alpha-D-glucosamine biosynthesis; N-acetyl-alpha-D-glucosamine 1-phosphate from alpha-D-glucosamine 6-phosphate (route II): step 2/2. The protein operates within nucleotide-sugar biosynthesis; UDP-N-acetyl-alpha-D-glucosamine biosynthesis; UDP-N-acetyl-alpha-D-glucosamine from N-acetyl-alpha-D-glucosamine 1-phosphate: step 1/1. It participates in bacterial outer membrane biogenesis; LPS lipid A biosynthesis. In terms of biological role, catalyzes the last two sequential reactions in the de novo biosynthetic pathway for UDP-N-acetylglucosamine (UDP-GlcNAc). The C-terminal domain catalyzes the transfer of acetyl group from acetyl coenzyme A to glucosamine-1-phosphate (GlcN-1-P) to produce N-acetylglucosamine-1-phosphate (GlcNAc-1-P), which is converted into UDP-GlcNAc by the transfer of uridine 5-monophosphate (from uridine 5-triphosphate), a reaction catalyzed by the N-terminal domain. The chain is Bifunctional protein GlmU from Staphylococcus saprophyticus subsp. saprophyticus (strain ATCC 15305 / DSM 20229 / NCIMB 8711 / NCTC 7292 / S-41).